The following is a 211-amino-acid chain: Orotidine 5'-phosphate decarboxylase (211 aa).

Residues aspartate 7, lysine 29, 57 to 66, serine 109, 162 to 172, glycine 185, and arginine 186 each bind substrate; these read DLKLADIPNT and PGIGAQGGSPV. The Proton donor role is filled by lysine 59.

Belongs to the OMP decarboxylase family. Type 1 subfamily. As to quaternary structure, homodimer.

It carries out the reaction orotidine 5'-phosphate + H(+) = UMP + CO2. Its pathway is pyrimidine metabolism; UMP biosynthesis via de novo pathway; UMP from orotate: step 2/2. In terms of biological role, catalyzes the decarboxylation of orotidine 5'-monophosphate (OMP) to uridine 5'-monophosphate (UMP). This chain is Orotidine 5'-phosphate decarboxylase, found in Pyrococcus furiosus (strain ATCC 43587 / DSM 3638 / JCM 8422 / Vc1).